Consider the following 126-residue polypeptide: Small ribosomal subunit protein uS11 (126 aa).

This sequence belongs to the universal ribosomal protein uS11 family. Part of the 30S ribosomal subunit.

In terms of biological role, located on the platform of the 30S subunit. The sequence is that of Small ribosomal subunit protein uS11 from Methanosarcina mazei (strain ATCC BAA-159 / DSM 3647 / Goe1 / Go1 / JCM 11833 / OCM 88) (Methanosarcina frisia).